A 470-amino-acid chain; its full sequence is tRNA-2-methylthio-N(6)-dimethylallyladenosine synthase (470 aa).

The MTTase N-terminal domain occupies Arg-5 to Ala-122. Residues Cys-14, Cys-50, Cys-85, Cys-163, Cys-167, and Cys-170 each coordinate [4Fe-4S] cluster. The Radical SAM core domain maps to Arg-149 to Asp-383. The TRAM domain maps to Glu-384–Glu-446. Residues Ser-439–Ala-470 form a disordered region. Residues Pro-444–Pro-464 are compositionally biased toward low complexity.

This sequence belongs to the methylthiotransferase family. MiaB subfamily. Monomer. Requires [4Fe-4S] cluster as cofactor.

The protein localises to the cytoplasm. It catalyses the reaction N(6)-dimethylallyladenosine(37) in tRNA + (sulfur carrier)-SH + AH2 + 2 S-adenosyl-L-methionine = 2-methylsulfanyl-N(6)-dimethylallyladenosine(37) in tRNA + (sulfur carrier)-H + 5'-deoxyadenosine + L-methionine + A + S-adenosyl-L-homocysteine + 2 H(+). Functionally, catalyzes the methylthiolation of N6-(dimethylallyl)adenosine (i(6)A), leading to the formation of 2-methylthio-N6-(dimethylallyl)adenosine (ms(2)i(6)A) at position 37 in tRNAs that read codons beginning with uridine. This chain is tRNA-2-methylthio-N(6)-dimethylallyladenosine synthase, found in Xanthobacter autotrophicus (strain ATCC BAA-1158 / Py2).